The chain runs to 427 residues: Transcriptional enhancer factor TEF-3 (427 aa).

Residues 1–32 (MTSNEWSSPDSPEGSSISGGSQALDKPIDNDA) form a disordered region. Residues 7-21 (SSPDSPEGSSISGGS) show a composition bias toward low complexity. Residues 29–105 (DNDAEGVWSP…QVLARRKARE (77 aa)) constitute a DNA-binding region (TEA). Residues 78-94 (IKLRTGKTRTRKQVSSH) carry the Nuclear localization signal motif. The disordered stretch occupies residues 163 to 206 (QPGTSHDVKPFSQNTYPVQPPLPLPGFESPAGPTPSPSAPLAPP). Positions 194 to 205 (GPTPSPSAPLAP) are enriched in pro residues.

Interacts with WWTR1/TAZ. Interacts with YAP1. In terms of tissue distribution, preferentially expressed in lung and in skeletal muscle.

It is found in the nucleus. Functionally, transcription factor which plays a key role in the Hippo signaling pathway, a pathway involved in organ size control and tumor suppression by restricting proliferation and promoting apoptosis. The core of this pathway is composed of a kinase cascade wherein MST1/MST2, in complex with its regulatory protein SAV1, phosphorylates and activates LATS1/2 in complex with its regulatory protein MOB1, which in turn phosphorylates and inactivates YAP1 oncoprotein and WWTR1/TAZ. Acts by mediating gene expression of YAP1 and WWTR1/TAZ, thereby regulating cell proliferation, migration and epithelial mesenchymal transition (EMT) induction. Binds specifically and non-cooperatively to the Sph and GT-IIC 'enhansons' (5'-GTGGAATGT-3') and activates transcription. Binds to the M-CAT motif. Might play a role in the embryonic development of skeletal muscle. The protein is Transcriptional enhancer factor TEF-3 (Tead4) of Mus musculus (Mouse).